A 319-amino-acid chain; its full sequence is Ribonuclease Z (319 aa).

Zn(2+) is bound by residues His62, His64, Asp66, His67, His145, Asp216, and His274. The active-site Proton acceptor is the Asp66.

This sequence belongs to the RNase Z family. In terms of assembly, homodimer. Zn(2+) is required as a cofactor.

The enzyme catalyses Endonucleolytic cleavage of RNA, removing extra 3' nucleotides from tRNA precursor, generating 3' termini of tRNAs. A 3'-hydroxy group is left at the tRNA terminus and a 5'-phosphoryl group is left at the trailer molecule.. Functionally, zinc phosphodiesterase, which displays some tRNA 3'-processing endonuclease activity. Probably involved in tRNA maturation, by removing a 3'-trailer from precursor tRNA. In Synechococcus sp. (strain CC9605), this protein is Ribonuclease Z.